A 187-amino-acid chain; its full sequence is Intermembrane transport lipoprotein PqiC (187 aa).

Residues methionine 1–glycine 15 form the signal peptide. A lipid anchor (N-palmitoyl cysteine) is attached at cysteine 16. A lipid anchor (S-diacylglycerol cysteine) is attached at cysteine 16.

As to quaternary structure, may form a complex composed of PqiA, PqiB and PqiC. Interacts with PqiB.

Its subcellular location is the cell outer membrane. Functionally, component of a transport pathway that contributes to membrane integrity. In Escherichia coli (strain K12), this protein is Intermembrane transport lipoprotein PqiC.